Here is a 919-residue protein sequence, read N- to C-terminus: Valine--tRNA ligase (919 aa).

The short motif at 46–56 (PNVTGTLHMGH) is the 'HIGH' region element. The short motif at 528-532 (KMSKS) is the 'KMSKS' region element. Lys-531 contacts ATP. The stretch at 849-919 (LAGLVDIEAE…KTLEKKEALG (71 aa)) forms a coiled coil.

Belongs to the class-I aminoacyl-tRNA synthetase family. ValS type 1 subfamily. As to quaternary structure, monomer.

The protein localises to the cytoplasm. The enzyme catalyses tRNA(Val) + L-valine + ATP = L-valyl-tRNA(Val) + AMP + diphosphate. Functionally, catalyzes the attachment of valine to tRNA(Val). As ValRS can inadvertently accommodate and process structurally similar amino acids such as threonine, to avoid such errors, it has a 'posttransfer' editing activity that hydrolyzes mischarged Thr-tRNA(Val) in a tRNA-dependent manner. This is Valine--tRNA ligase from Francisella tularensis subsp. tularensis (strain SCHU S4 / Schu 4).